The following is a 497-amino-acid chain: Probable malate:quinone oxidoreductase (497 aa).

This sequence belongs to the MQO family. It depends on FAD as a cofactor.

It catalyses the reaction (S)-malate + a quinone = a quinol + oxaloacetate. It functions in the pathway carbohydrate metabolism; tricarboxylic acid cycle; oxaloacetate from (S)-malate (quinone route): step 1/1. The chain is Probable malate:quinone oxidoreductase from Bacillus cereus (strain ATCC 14579 / DSM 31 / CCUG 7414 / JCM 2152 / NBRC 15305 / NCIMB 9373 / NCTC 2599 / NRRL B-3711).